Reading from the N-terminus, the 535-residue chain is Glutamate--cysteine ligase (535 aa).

Belongs to the glutamate--cysteine ligase type 1 family. Type 1 subfamily.

The catalysed reaction is L-cysteine + L-glutamate + ATP = gamma-L-glutamyl-L-cysteine + ADP + phosphate + H(+). It participates in sulfur metabolism; glutathione biosynthesis; glutathione from L-cysteine and L-glutamate: step 1/2. The protein is Glutamate--cysteine ligase of Pseudomonas savastanoi pv. phaseolicola (strain 1448A / Race 6) (Pseudomonas syringae pv. phaseolicola (strain 1448A / Race 6)).